The sequence spans 145 residues: Glutaconyl-CoA decarboxylase subunit gamma (145 aa).

Residues 52-82 (APAPAAAPAAAPAPAAKPAAAAPAGSVTVSA) are disordered. The segment covering 57–75 (AAPAAAPAPAAKPAAAAPA) has biased composition (low complexity). In terms of domain architecture, Biotinyl-binding spans 77–145 (SVTVSAPMPG…VATGDVMVIL (69 aa)). Residue K112 is modified to N6-biotinyllysine.

In terms of assembly, heterooctamer consisting of two alpha, two beta, two gamma and two delta subunits. Biotin serves as cofactor.

It catalyses the reaction (2E)-glutaconyl-CoA + Na(+)(in) + H(+) = (2E)-butenoyl-CoA + Na(+)(out) + CO2. It participates in amino-acid degradation; L-glutamate degradation via hydroxyglutarate pathway; crotonoyl-CoA from L-glutamate: step 5/5. In terms of biological role, biotin carrier subunit of the primary sodium pump glutaconyl-CoA decarboxylase (GCD). The polypeptide is Glutaconyl-CoA decarboxylase subunit gamma (gcdC) (Acidaminococcus fermentans (strain ATCC 25085 / DSM 20731 / CCUG 9996 / CIP 106432 / VR4)).